The following is a 78-amino-acid chain: Putative membrane protein insertion efficiency factor (78 aa).

It belongs to the UPF0161 family.

It localises to the cell inner membrane. Could be involved in insertion of integral membrane proteins into the membrane. The polypeptide is Putative membrane protein insertion efficiency factor (Prochlorococcus marinus (strain MIT 9312)).